We begin with the raw amino-acid sequence, 666 residues long: Translation factor guf1, mitochondrial (666 aa).

Residues 1–44 constitute a mitochondrion transit peptide; that stretch reads MRGCLQLGRWLSAAPRCQAASLRPPTVFPSYRYNRSFSTTTIYY. The region spanning 68–248 is the tr-type G domain; that stretch reads ERFRNFCIVA…TVVEKVPAPI (181 aa). GTP is bound by residues 77–84, 141–145, and 195–198; these read AHVDHGKS, DTPGH, and NKVD.

This sequence belongs to the TRAFAC class translation factor GTPase superfamily. Classic translation factor GTPase family. LepA subfamily.

The protein localises to the mitochondrion inner membrane. The enzyme catalyses GTP + H2O = GDP + phosphate + H(+). Functionally, promotes mitochondrial protein synthesis. May act as a fidelity factor of the translation reaction, by catalyzing a one-codon backward translocation of tRNAs on improperly translocated ribosomes. Binds to mitochondrial ribosomes in a GTP-dependent manner. The polypeptide is Translation factor guf1, mitochondrial (guf1) (Penicillium rubens (strain ATCC 28089 / DSM 1075 / NRRL 1951 / Wisconsin 54-1255) (Penicillium chrysogenum)).